Reading from the N-terminus, the 370-residue chain is Glucan endo-1,3-beta-glucosidase, basic vacuolar isoform GLB (370 aa).

An N-terminal signal peptide occupies residues methionine 1–alanine 32. The residue at position 33 (glutamine 33) is a Pyrrolidone carboxylic acid. Residue glutamate 128 is the Proton donor of the active site. Glutamate 273 functions as the Nucleophile in the catalytic mechanism. The propeptide at valine 349–methionine 370 is removed in mature form. An N-linked (GlcNAc...) asparagine glycan is attached at asparagine 361.

This sequence belongs to the glycosyl hydrolase 17 family. In terms of tissue distribution, is expressed primarily in epidermal cell of healthy plant, and following induction by ethylene, accumulates in mesophyll cells.

The protein localises to the vacuole. The catalysed reaction is Hydrolysis of (1-&gt;3)-beta-D-glucosidic linkages in (1-&gt;3)-beta-D-glucans.. Implicated in the defense of plants against pathogens. This Nicotiana tabacum (Common tobacco) protein is Glucan endo-1,3-beta-glucosidase, basic vacuolar isoform GLB.